The following is a 218-amino-acid chain: Pyridoxine/pyridoxamine 5'-phosphate oxidase (218 aa).

Residues 14 to 17 (RREY) and Lys72 contribute to the substrate site. Residues 67–72 (RIVLLK), 82–83 (YT), Arg88, Lys89, and Gln111 contribute to the FMN site. Residues Tyr129, Arg133, and Ser137 each coordinate substrate. Residues 146-147 (QS) and Trp191 each bind FMN. Residue 197–199 (RLH) coordinates substrate. Residue Arg201 coordinates FMN.

It belongs to the pyridoxamine 5'-phosphate oxidase family. In terms of assembly, homodimer. FMN is required as a cofactor.

It carries out the reaction pyridoxamine 5'-phosphate + O2 + H2O = pyridoxal 5'-phosphate + H2O2 + NH4(+). The catalysed reaction is pyridoxine 5'-phosphate + O2 = pyridoxal 5'-phosphate + H2O2. It functions in the pathway cofactor metabolism; pyridoxal 5'-phosphate salvage; pyridoxal 5'-phosphate from pyridoxamine 5'-phosphate: step 1/1. It participates in cofactor metabolism; pyridoxal 5'-phosphate salvage; pyridoxal 5'-phosphate from pyridoxine 5'-phosphate: step 1/1. Catalyzes the oxidation of either pyridoxine 5'-phosphate (PNP) or pyridoxamine 5'-phosphate (PMP) into pyridoxal 5'-phosphate (PLP). The chain is Pyridoxine/pyridoxamine 5'-phosphate oxidase from Escherichia coli O7:K1 (strain IAI39 / ExPEC).